Here is a 384-residue protein sequence, read N- to C-terminus: Probable intron-encoded endonuclease Cox1-I1b (384 aa).

This sequence belongs to the LAGLIDADG endonuclease family.

It is found in the mitochondrion. Probable mitochondrial DNA endonuclease involved in intron homing. The polypeptide is Probable intron-encoded endonuclease Cox1-I1b (cox1-I1b) (Schizosaccharomyces pombe (strain 972 / ATCC 24843) (Fission yeast)).